Here is a 34-residue protein sequence, read N- to C-terminus: EQLIKKDVKHKDKFAKKSECVRAAAAAFTGGDKS.

In terms of tissue distribution, expressed by the venom gland.

The protein resides in the secreted. In Scolopendra viridicornis nigra (Brazilian giant centipede), this protein is Scolopendra 5848.48 Da toxin.